We begin with the raw amino-acid sequence, 599 residues long: NADH-quinone oxidoreductase subunit C/D (599 aa).

An NADH dehydrogenase I subunit C region spans residues 1–190 (MMIDQIAQES…DPFELTRQKE (190 aa)). The NADH dehydrogenase I subunit D stretch occupies residues 214-599 (DFMFLNLGPN…IDFVMSDVDR (386 aa)).

The protein in the N-terminal section; belongs to the complex I 30 kDa subunit family. It in the C-terminal section; belongs to the complex I 49 kDa subunit family. In terms of assembly, NDH-1 is composed of 13 different subunits. Subunits NuoB, CD, E, F, and G constitute the peripheral sector of the complex.

The protein resides in the cell inner membrane. It carries out the reaction a quinone + NADH + 5 H(+)(in) = a quinol + NAD(+) + 4 H(+)(out). Functionally, NDH-1 shuttles electrons from NADH, via FMN and iron-sulfur (Fe-S) centers, to quinones in the respiratory chain. The immediate electron acceptor for the enzyme in this species is believed to be ubiquinone. Couples the redox reaction to proton translocation (for every two electrons transferred, four hydrogen ions are translocated across the cytoplasmic membrane), and thus conserves the redox energy in a proton gradient. This Photorhabdus laumondii subsp. laumondii (strain DSM 15139 / CIP 105565 / TT01) (Photorhabdus luminescens subsp. laumondii) protein is NADH-quinone oxidoreductase subunit C/D.